We begin with the raw amino-acid sequence, 129 residues long: Small ribosomal subunit protein uS9 (129 aa).

The tract at residues 98-129 is disordered; it reads KAQGFLTRDPRKKERKKYGRKKARKSFQFSKR. A compositionally biased stretch (basic residues) spans 110–129; the sequence is KERKKYGRKKARKSFQFSKR.

Belongs to the universal ribosomal protein uS9 family.

This chain is Small ribosomal subunit protein uS9, found in Chlamydia trachomatis serovar L2 (strain ATCC VR-902B / DSM 19102 / 434/Bu).